The primary structure comprises 640 residues: Threonine--tRNA ligase (640 aa).

The TGS domain maps to 1 to 61 (MPIITLPNGD…TEDSTLQIIT (61 aa)). The catalytic stretch occupies residues 242 to 533 (DHRKIGKALD…LIEHYAGFMP (292 aa)). Residues C333, H384, and H510 each contribute to the Zn(2+) site.

Belongs to the class-II aminoacyl-tRNA synthetase family. As to quaternary structure, homodimer. Zn(2+) is required as a cofactor.

The protein localises to the cytoplasm. The catalysed reaction is tRNA(Thr) + L-threonine + ATP = L-threonyl-tRNA(Thr) + AMP + diphosphate + H(+). Its function is as follows. Catalyzes the attachment of threonine to tRNA(Thr) in a two-step reaction: L-threonine is first activated by ATP to form Thr-AMP and then transferred to the acceptor end of tRNA(Thr). Also edits incorrectly charged L-seryl-tRNA(Thr). This Acinetobacter baumannii (strain SDF) protein is Threonine--tRNA ligase.